We begin with the raw amino-acid sequence, 131 residues long: Large ribosomal subunit protein bL17 (131 aa).

This sequence belongs to the bacterial ribosomal protein bL17 family. Part of the 50S ribosomal subunit. Contacts protein L32.

This is Large ribosomal subunit protein bL17 from Shewanella amazonensis (strain ATCC BAA-1098 / SB2B).